The following is an 836-amino-acid chain: General vesicular transport factor p115 (836 aa).

The tract at residues 1–22 is disordered; sequence MEFLKSGIKTVLGSTEPGQQPS. The segment covering 12-22 has biased composition (polar residues); the sequence is LGSTEPGQQPS. ARM repeat units follow at residues 24–64, 65–124, 126–166, 169–210, 211–256, 316–359, 368–413, 424–463, 477–518, 523–577, and 579–636; these read AETV…VGAQ, GMPP…IKTP, HVTL…LILV, MGVS…VAFE, NAFD…FKEG, RLLH…LGRV, PAIV…QTLL, STGQ…EELL, TLLE…KALL, TMAY…IIKR, and GQES…LVSG. Coiled coils occupy residues 663–707 and 744–806; these read IIRG…DQNT and NMYF…EEAG. Positions 803–836 are disordered; the sequence is EEAGSTNTLPTSNVAPSVPAAGGGSPIPSGTASR. Positions 806–816 are enriched in polar residues; the sequence is GSTNTLPTSNV. Residues 817–836 are compositionally biased toward low complexity; it reads APSVPAAGGGSPIPSGTASR.

It belongs to the VDP/USO1/EDE1 family.

It is found in the cytoplasm. Its subcellular location is the golgi apparatus. It localises to the golgi stack. The protein resides in the golgi stack membrane. The protein localises to the endoplasmic reticulum. It is found in the endoplasmic reticulum membrane. In terms of biological role, essential for maintaining the architecture of the Golgi stacks and for normal organization of the transitional endoplasmic reticulum (tER). Required for both the formation of the Golgi stacks and the maintenance of the individual cisternae. The chain is General vesicular transport factor p115 from Drosophila melanogaster (Fruit fly).